The following is a 73-amino-acid chain: Large ribosomal subunit protein bL31 (73 aa).

Belongs to the bacterial ribosomal protein bL31 family. Type A subfamily. Part of the 50S ribosomal subunit.

Functionally, binds the 23S rRNA. The polypeptide is Large ribosomal subunit protein bL31 (Rhizobium etli (strain CIAT 652)).